A 671-amino-acid polypeptide reads, in one-letter code: TOM1-like protein 6 (671 aa).

Ala2 is subject to N-acetylalanine. Residues 15–144 (ATSDLLLGPD…ELRRSGVEFP (130 aa)) enclose the VHS domain. The residue at position 147 (Ser147) is a Phosphoserine. Residues 229-317 (EVEGLSLSSI…LLAKHDAIAS (89 aa)) enclose the GAT domain. 2 disordered regions span residues 320–620 (PLPV…VGQK) and 636–671 (GSAD…RKMI). Residues 334–362 (ASKPADSSPKSSEAKDSSSIAGSSSPIPA) are compositionally biased toward low complexity. The segment covering 372-382 (DEEYEEEEDEF) has biased composition (acidic residues). The span at 395-405 (SVTTDPTSLES) shows a compositional bias: polar residues. Low complexity predominate over residues 407 to 417 (NAASNALALAL). Positions 444 to 459 (STPPAPSSQPSPPPPA) are enriched in pro residues. The span at 483 to 554 (AQQQQPQQPQ…QPSTRPQNPY (72 aa)) shows a compositional bias: low complexity. 2 stretches are compositionally biased toward polar residues: residues 562-598 (ASTS…NSFP) and 605-616 (QATSTASNSGVS). A Phosphoserine modification is found at Ser596. Positions 647–663 (NSSNGSQNLSGSQTQQS) are enriched in low complexity.

It belongs to the TOM1 family. Ubiquitously expressed.

Its subcellular location is the endosome. It localises to the multivesicular body. It is found in the cytoplasm. The protein resides in the early endosome membrane. Functionally, acts as a gatekeeper for degradative protein sorting to the vacuole. Plays a role in recognition of ubiquitinated PIN2 auxin carrier at the plasma membrane and further to its endocytic sorting. Binds ubiquitin in vitro. Might contribute to the loading of the ESCRT machinery. This chain is TOM1-like protein 6, found in Arabidopsis thaliana (Mouse-ear cress).